An 872-amino-acid chain; its full sequence is Metabotropic glutamate receptor 2 (872 aa).

Positions 1–18 are cleaved as a signal peptide; it reads MESLLGFLALLLLWGAVA. The Extracellular portion of the chain corresponds to 19 to 567; sequence EGPAKKVLTL…QEYIRWGDAW (549 aa). A disulfide bridge links Cys50 with Cys92. Arg57, Arg61, Ser145, Ala166, and Thr168 together coordinate L-glutamate. Asn203 and Asn286 each carry an N-linked (GlcNAc...) asparagine glycan. Intrachain disulfides connect Cys234/Cys518, Cys355/Cys362, Cys400/Cys407, Cys500/Cys519, Cys504/Cys522, Cys525/Cys537, and Cys540/Cys553. Asp295 lines the L-glutamate pocket. N-linked (GlcNAc...) asparagine glycosylation is present at Asn338. Lys377 lines the L-glutamate pocket. N-linked (GlcNAc...) asparagine glycosylation is present at Asn402. An N-linked (GlcNAc...) asparagine glycan is attached at Asn547. The chain crosses the membrane as a helical span at residues 568-590; it reads AVGPVTIACLGALATLFVLGVFV. Topologically, residues 591–604 are cytoplasmic; sequence RHNATPVVKASGRE. A helical transmembrane segment spans residues 605 to 625; sequence LCYILLGGVFLCYCMTFVFIA. The Extracellular segment spans residues 626–636; the sequence is KPSTAVCTLRR. A disulfide bridge links Cys632 with Cys721. Residues 637 to 655 form a helical membrane-spanning segment; sequence LGLGTAFSVCYSALLTKTN. The Cytoplasmic segment spans residues 656-679; sequence RIARIFGGAREGAQRPRFISPASQ. Residues 677–685 form an important for interaction with HTR2A region; it reads ASQVAICLA. Residues 680-700 traverse the membrane as a helical segment; sequence VAICLALISGQLLIVAAWLVV. At 701–725 the chain is on the extracellular side; sequence EAPGTGKETAPERREVVTLRCNHRD. Residues 726-747 traverse the membrane as a helical segment; it reads ASMLGSLAYNVLLIALCTLYAF. Residues 748 to 760 lie on the Cytoplasmic side of the membrane; that stretch reads KTRKCPENFNEAK. Residues 761-783 form a helical membrane-spanning segment; it reads FIGFTMYTTCIIWLAFLPIFYVT. Residues 784-793 lie on the Extracellular side of the membrane; the sequence is SSDYRVQTTT. Residues 794–819 traverse the membrane as a helical segment; it reads MCVSVSLSGSVVLGCLFAPKLHIILF. Topologically, residues 820–872 are cytoplasmic; that stretch reads QPQKNVVSHRAPTSRFGSAAPRASANLGQGSGSQFVPTVCNGREVVDSTTSSL.

Belongs to the G-protein coupled receptor 3 family. As to quaternary structure, forms heterodimers with GRM3 or GRM4. Interacts with GNAI1. Interacts with TAMALIN. Interacts with HTR2A. As to expression, is widely distributed in the CNS and prominent expression is seen in Golgi cells of the cerebellum and some particular neuronal cells in other brain regions.

The protein resides in the cell membrane. Its subcellular location is the synapse. The protein localises to the cell projection. It is found in the dendrite. Dimeric G protein-coupled receptor which is activated by the excitatory neurotransmitter L-glutamate. Plays critical roles in modulating synaptic transmission and neuronal excitability. Upon activation by glutamate, inhibits presynaptic calcium channels, reducing further glutamate release and dampening excitatory signaling. Mechanistically, ligand binding causes a conformation change that triggers signaling via guanine nucleotide-binding proteins (G proteins) and modulates the activity of down-stream effectors, such as adenylate cyclase. May mediate suppression of neurotransmission or may be involved in synaptogenesis or synaptic stabilization. The protein is Metabotropic glutamate receptor 2 (Grm2) of Rattus norvegicus (Rat).